Consider the following 208-residue polypeptide: Urease accessory protein UreE (208 aa).

The tract at residues 145–165 (EGGAYSAGGHGHTHAPAATPV) is disordered.

It belongs to the UreE family.

Its subcellular location is the cytoplasm. Functionally, involved in urease metallocenter assembly. Binds nickel. Probably functions as a nickel donor during metallocenter assembly. The sequence is that of Urease accessory protein UreE from Polaromonas naphthalenivorans (strain CJ2).